A 1185-amino-acid chain; its full sequence is MHVHVCVCLCVCIYTSSCVCACVHMCMRDALLAEGRGGGLAAADDFLYLECCKCFSQESQIAMVCQERSQNETYEVKMNNDTEACRATLNLEERRSVAIRSRENVVFVQTDKPTYKPGQKDVNGIAQFFLDTYTFTYPNITLKDPQNNRIFQRQNVTSFRNITQLSFQLISEPMFGDYWIVVKRNSRETVTHQFAVKRYVLPKFEVTVNAPQTVTISDDEFQVDVCAYNFGQPVQGETQIRVCREYFSSSNCEKNENEICEQFIAQVQTNLDIFTLLCSSFLTVMQISEKTSVFITQLLGTVNFENMDTFYRRGISYFGQLKFSDPNNVPMVNKLLQLELNDEFIGNYTTDENGEAQFSIDTSDIFDPEFNLKVRHQRTEECYLPSWLTPQYLDAHFLVSRFYSRTNSFLKIVPEPKQLECNQQKVVTVHYSLNSEAYEDDSNVKFFYLNGNFSFPISISADLAPAAVLFVYTLHPSGEIVADSVRFQVDKCFKHKVNIKFSNEQGLPGSNASLCLQAAPVLFCALRAVDRNVLLLKSEQQLSAESVSSLYNMVPSIEPYGYFYHGLNLDDGKEDPCIPQRDMFYNGLYYTPVSNYGDGDIYNIVRVRSLRILENIIQTVRTNFPETWMWDLVSVSSSGSANLSFLIPDTITQWEASGFCVNGDVGFGISSTTTLEVSQPFFIEIASPFSVVQNEQFDLIVNVFSYRNTCVEVSYIWECLPGKVNITVVAESKQSSACPNEGMEQQKLNWKDTVVQSFLVEFLFLGDILGLALQNLVVLQMPYGSGEQNAALLASDTYVLDYLKSTEQLTEEVQSKAFFLSILGYQRQLSFKNSDGSYSVFWQQSQKGSIWLSALTFKTLERMKKYVFIDENVQKQTLIWLSSQQKTSGCFKNDGQLFNHALRNALFCLEAALDSGVTNGYNHAILAYAFALAGKEKQVESLLQTLDQSAPKLSKRYYWERERKPKTEEFPSFIPWAPSAQTEKSCYVLLAVISRKIPDLTYASKIVQWLAQRMNSHGGFSSNQVINVGLILIAARGEEGLFSKDQNTVTFSSEGSSEIFQVNGHNRLLVQRSEVTQAPGEYTVDVEGHGCTFIQIFRYTGIRNKSSMVVIDVKMLSGFTPTMSSIEEVNNRSLIFQHKDSYIEYKRADSFPFSVEQSNLVFNIQPAPAMVYDYYEKGRQATAMP.

Positions 1 to 21 (MHVHVCVCLCVCIYTSSCVCA) are cleaved as a signal peptide. N-linked (GlcNAc...) asparagine glycosylation is found at Asn80, Asn155, Asn347, Asn452, and Asn725.

It belongs to the protease inhibitor I39 (alpha-2-macroglobulin) family. Homotetramer.

It localises to the secreted. In terms of biological role, is able to inhibit all four classes of proteinases by a unique 'trapping' mechanism. This Homo sapiens (Human) protein is Ovostatin homolog 1 (OVOS1).